Reading from the N-terminus, the 383-residue chain is D-alanine--D-alanine ligase (383 aa).

One can recognise an ATP-grasp domain in the interval 164–373 (KLAFQAAGLE…YSALIDELIT (210 aa)). Residue 196 to 251 (VAELGFPVFVKPARAGSSFGITRVDEPSQLDAAIATAREHDLKLVVEAGIDGREIE) participates in ATP binding. D327, E340, and N342 together coordinate Mg(2+).

The protein belongs to the D-alanine--D-alanine ligase family. Mg(2+) is required as a cofactor. Requires Mn(2+) as cofactor.

It is found in the cytoplasm. The enzyme catalyses 2 D-alanine + ATP = D-alanyl-D-alanine + ADP + phosphate + H(+). The protein operates within cell wall biogenesis; peptidoglycan biosynthesis. In terms of biological role, cell wall formation. This Kocuria rhizophila (strain ATCC 9341 / DSM 348 / NBRC 103217 / DC2201) protein is D-alanine--D-alanine ligase.